A 120-amino-acid chain; its full sequence is NAD(P)H-quinone oxidoreductase subunit 3, chloroplastic (120 aa).

3 consecutive transmembrane segments (helical) span residues 9–29, 64–84, and 88–108; these read IFWAFLLISSVIPILAFLLSG, MFALVFVVFDVETVFLYPWAM, and VLGVSVFIEALIFVLILIVGL.

The protein belongs to the complex I subunit 3 family. In terms of assembly, NDH is composed of at least 16 different subunits, 5 of which are encoded in the nucleus.

The protein resides in the plastid. It is found in the chloroplast thylakoid membrane. It catalyses the reaction a plastoquinone + NADH + (n+1) H(+)(in) = a plastoquinol + NAD(+) + n H(+)(out). The catalysed reaction is a plastoquinone + NADPH + (n+1) H(+)(in) = a plastoquinol + NADP(+) + n H(+)(out). Functionally, NDH shuttles electrons from NAD(P)H:plastoquinone, via FMN and iron-sulfur (Fe-S) centers, to quinones in the photosynthetic chain and possibly in a chloroplast respiratory chain. The immediate electron acceptor for the enzyme in this species is believed to be plastoquinone. Couples the redox reaction to proton translocation, and thus conserves the redox energy in a proton gradient. This Fagopyrum esculentum subsp. ancestrale (Wild buckwheat) protein is NAD(P)H-quinone oxidoreductase subunit 3, chloroplastic.